We begin with the raw amino-acid sequence, 402 residues long: Probable peptidoglycan glycosyltransferase FtsW (402 aa).

Residues 1–24 (MLYRLKLLLSGQNTKKERVRAKLE) lie on the Cytoplasmic side of the membrane. Residues 25–45 (IDISIVFVMLGLLIFGWVMVT) form a helical membrane-spanning segment. The Periplasmic segment spans residues 46–63 (SASMVVALDDYNNPYFYS). The chain crosses the membrane as a helical span at residues 64–84 (IRQGFFAVIAIFLFLLALLVP). Over 85 to 91 (TKNYEKN) the chain is Cytoplasmic. The chain crosses the membrane as a helical span at residues 92–112 (YNAFFFIMLIVLVAVLVPGVG). Residues 113-121 (KSVNGARRW) lie on the Periplasmic side of the membrane. The helical transmembrane segment at 122-142 (IPLIIINIQVAELAKLLAIIF) threads the bilayer. Residues 143-160 (FSGYIAENLPKMTNFKEG) lie on the Cytoplasmic side of the membrane. 2 helical membrane-spanning segments follow: residues 161 to 181 (ILTP…QPDF) and 182 to 202 (GSTV…GNKV). Residue Arg203 is a topological domain, cytoplasmic. Residues 204–224 (WYGLLIGAMLIMATMLVIISP) traverse the membrane as a helical segment. The Periplasmic portion of the chain corresponds to 225 to 284 (YRMHRITGFLHPWENANGSGYQLVQALIGFGRGGWFGDGLGNGVQKQFFLPEAHTDFITS). Residues 285-305 (VIAEEIGVIGLMILLMVYLFI) traverse the membrane as a helical segment. Topologically, residues 306 to 324 (VFRAMNIAKMAFELKRYYQ) are cytoplasmic. The chain crosses the membrane as a helical span at residues 325 to 345 (AFLSYGISFWIGFQVFVNIGV). Topologically, residues 346 to 357 (NTGLLPTKGLTL) are periplasmic. The helical transmembrane segment at 358–378 (PLISYGGSSLLIMCFTLGILV) threads the bilayer. Residues 379–402 (RVDFENKLLADTINPKYIYKKVRK) are Cytoplasmic-facing.

It belongs to the SEDS family. FtsW subfamily.

It is found in the cell inner membrane. It carries out the reaction [GlcNAc-(1-&gt;4)-Mur2Ac(oyl-L-Ala-gamma-D-Glu-L-Lys-D-Ala-D-Ala)](n)-di-trans,octa-cis-undecaprenyl diphosphate + beta-D-GlcNAc-(1-&gt;4)-Mur2Ac(oyl-L-Ala-gamma-D-Glu-L-Lys-D-Ala-D-Ala)-di-trans,octa-cis-undecaprenyl diphosphate = [GlcNAc-(1-&gt;4)-Mur2Ac(oyl-L-Ala-gamma-D-Glu-L-Lys-D-Ala-D-Ala)](n+1)-di-trans,octa-cis-undecaprenyl diphosphate + di-trans,octa-cis-undecaprenyl diphosphate + H(+). It participates in cell wall biogenesis; peptidoglycan biosynthesis. Peptidoglycan polymerase that is essential for cell division. The protein is Probable peptidoglycan glycosyltransferase FtsW of Francisella salina.